Here is a 371-residue protein sequence, read N- to C-terminus: Cytochrome b (371 aa).

4 helical membrane-spanning segments follow: residues 25-45, 69-90, 105-125, and 170-190; these read FGSMLLSCLFLQTTTGFFLAI, WIMQNTHAISASAFFICIYIHI, WLTGVALLTTLMATAFFGYVL, and FFALHFILPFLIISLSSIHII. Residues H75 and H89 each contribute to the heme b site. Residues H174 and H188 each coordinate heme b. H193 contributes to the a ubiquinone binding site. The next 4 membrane-spanning stretches (helical) occupy residues 218–238, 280–300, 312–332, and 339–358; these read YKDLLMFITLMTMLLLTLSFM, LGGALALTMSIIILTTAPFTH, LAQTLFWTLIATFITITWAAT, and FLLISQTTAILYFSFFIMNP.

Belongs to the cytochrome b family. In terms of assembly, the cytochrome bc1 complex contains 3 respiratory subunits (MT-CYB, CYC1 and UQCRFS1), 2 core proteins (UQCRC1 and UQCRC2) and probably 6 low-molecular weight proteins. Heme b is required as a cofactor.

Its subcellular location is the mitochondrion inner membrane. Component of the ubiquinol-cytochrome c reductase complex (complex III or cytochrome b-c1 complex) that is part of the mitochondrial respiratory chain. The b-c1 complex mediates electron transfer from ubiquinol to cytochrome c. Contributes to the generation of a proton gradient across the mitochondrial membrane that is then used for ATP synthesis. In Laticauda colubrina (Yellow-lipped sea krait), this protein is Cytochrome b (MT-CYB).